The following is a 131-amino-acid chain: C-glycoside deglycosidase beta subunit (131 aa).

This sequence belongs to the C-glycoside deglycosidase beta subunit family. In terms of assembly, heterodimer composed of an alpha subunit (CarB) and a beta subunit (CarC). A divalent metal cation is required as a cofactor.

It carries out the reaction 3''-dehydroisovitexin = 1,5-anhydro-D-erythro-hex-1-en-3-ulose + apigenin. The enzyme catalyses 3''-dehydroisoorientin = 1,5-anhydro-D-erythro-hex-1-en-3-ulose + luteolin. Functionally, carbon-carbon bond-cleaving enzyme which participates in the metabolism of C-glycosides. Acts on the C6-glycosylated compounds 3''-dehydroisovitexin (3''-oxo-isovitexin) and 3''-dehydroisoorientin (3''-oxo-homoorientin). Shows weak activity with 3'-dehydromangiferin (3'-oxo-mangiferin). This is C-glycoside deglycosidase beta subunit from Microbacterium trichothecenolyticum (Aureobacterium trichothecenolyticum).